Consider the following 189-residue polypeptide: Adenylate kinase (189 aa).

Position 11-16 (11-16 (GSGKGT)) interacts with ATP. The tract at residues 31-60 (STGDVLRAEIKNGTELGKTAKGYIDQGQLI) is NMP. Residues Thr32, Arg37, 58–60 (QLI), 86–89 (GFPR), and Gln93 each bind AMP. The tract at residues 127–137 (KRGKDSGRADD) is LID. Arg128 serves as a coordination point for ATP. 2 residues coordinate AMP: Arg134 and Arg145. An ATP-binding site is contributed by Gly173.

The protein belongs to the adenylate kinase family. Monomer.

It localises to the cytoplasm. It catalyses the reaction AMP + ATP = 2 ADP. It functions in the pathway purine metabolism; AMP biosynthesis via salvage pathway; AMP from ADP: step 1/1. In terms of biological role, catalyzes the reversible transfer of the terminal phosphate group between ATP and AMP. Plays an important role in cellular energy homeostasis and in adenine nucleotide metabolism. The protein is Adenylate kinase of Bacteroides thetaiotaomicron (strain ATCC 29148 / DSM 2079 / JCM 5827 / CCUG 10774 / NCTC 10582 / VPI-5482 / E50).